A 1081-amino-acid polypeptide reads, in one-letter code: Teashirt homolog 3 (1081 aa).

3 disordered regions span residues 25-104, 141-161, and 238-257; these read LVED…EVQV, PSSE…SSCG, and HYRD…WSKP. Residues 26 to 37 are compositionally biased toward acidic residues; that stretch reads VEDDVEPEEQAA. The segment covering 68–87 has biased composition (basic and acidic residues); the sequence is SSHEMDSESHISETSDRMAD. 2 consecutive C2H2-type zinc fingers follow at residues 214 to 238 and 275 to 299; these read FRCK…ETGH and LKCM…KTKH. Residues 238-247 show a composition bias toward basic and acidic residues; that stretch reads HYRDDNHETD. The segment at 325–346 is disordered; it reads SLELELPSSPDSTGGTPKATLS. A C2H2-type 3; atypical zinc finger spans residues 387-410; it reads KCMECGSSHDTLQELTAHMMVTGH. A compositionally biased stretch (basic and acidic residues) spans 474-491; sequence VDKEKAVPDEKPKEREKP. 4 disordered regions span residues 474–499, 626–699, 792–824, and 855–897; these read VDKE…EKYD, EKMK…KPLS, LTKG…TVTT, and TESH…RQSN. Residues 606–630 are a coiled coil; it reads NFHAMEELVKKVTEKVAKVEEKMKE. Residues 660–670 show a composition bias toward polar residues; it reads SDGSFKSQENS. Serine 682 is subject to Phosphoserine. Composition is skewed to low complexity over residues 800-824 and 856-869; these read GCSL…TVTT and ESHT…SSIS. A DNA-binding region (homeobox; atypical) is located at residues 891 to 961; that stretch reads RKGRQSNWNP…NVKYQLRRTG (71 aa). C2H2-type zinc fingers lie at residues 976–998 and 1041–1064; these read FFCN…LESH and YQCK…SKTH.

This sequence belongs to the teashirt C2H2-type zinc-finger protein family. Interacts (via N-terminus) with HDAC1 and HDAC2; the interaction is direct. Found in a trimeric complex with APBB1 and HDAC1; the interaction between HDAC1 and APBB1 is mediated by TSHZ3. Interacts (via homeobox domain) with APBB1 (via PID domain 1). In terms of tissue distribution, expressed in corticostriatal neurons.

The protein resides in the nucleus. The protein localises to the cell projection. It localises to the growth cone. Functionally, transcriptional regulator involved in developmental processes. Functions in association with APBB1, SET and HDAC factors as a transcriptional repressor, that inhibits the expression of CASP4. TSHZ3-mediated transcription repression involves the recruitment of histone deacetylases HDAC1 and HDAC2. Associates with chromatin in a region surrounding the CASP4 transcriptional start site(s). Regulates the development of neurons involved in both respiratory rhythm and airflow control. Promotes maintenance of nucleus ambiguus (nA) motoneurons, which govern upper airway function, and establishes a respiratory rhythm generator (RRG) activity compatible with survival at birth. Involved in the differentiation of the proximal uretic smooth muscle cells during developmental processes. Involved in the up-regulation of myocardin, that directs the expression of smooth muscle cells in the proximal ureter. Involved in the modulation of glutamatergic synaptic transmission and long-term synaptic potentiation. This is Teashirt homolog 3 (Tshz3) from Mus musculus (Mouse).